The chain runs to 308 residues: MNLPNIDQIKTYLLDLQDKICAALAQADGSAKFTEENWVREEGGGGRSRVMVKGAVFEQAGVNFSHVSGAALPASATAHRPELAGRSFQALGVSLVIHPNSPYLPTSHANVRFFIAEKPDEDPVWWFGGGFDLTPFYGFEEDAIHWHQTAYNLCQPFGEQLYSRYKKWCDDYFYIKHRNEARGIGGLFFDDLNSPDFDTCFNFTQAVGDGFLDAYMPIVARRKALCWGEREREFQLYRRGRYVEFNLVWDRGTLFGLQTGGRTESILMSMPPLVRWEYNYQPAADSAEVALYRDFLPVKDWLAAGEHH.

Residue S94 participates in substrate binding. 2 residues coordinate a divalent metal cation: H98 and H108. The active-site Proton donor is H108. 110–112 (NVR) serves as a coordination point for substrate. Residues H147 and H177 each coordinate a divalent metal cation. The segment at 242–277 (YVEFNLVWDRGTLFGLQTGGRTESILMSMPPLVRWE) is important for dimerization. Residue 260–262 (GGR) participates in substrate binding.

It belongs to the aerobic coproporphyrinogen-III oxidase family. In terms of assembly, homodimer. Requires a divalent metal cation as cofactor.

The protein localises to the cytoplasm. The enzyme catalyses coproporphyrinogen III + O2 + 2 H(+) = protoporphyrinogen IX + 2 CO2 + 2 H2O. It functions in the pathway porphyrin-containing compound metabolism; protoporphyrin-IX biosynthesis; protoporphyrinogen-IX from coproporphyrinogen-III (O2 route): step 1/1. In terms of biological role, involved in the heme biosynthesis. Catalyzes the aerobic oxidative decarboxylation of propionate groups of rings A and B of coproporphyrinogen-III to yield the vinyl groups in protoporphyrinogen-IX. The polypeptide is Oxygen-dependent coproporphyrinogen-III oxidase (Yersinia enterocolitica serotype O:8 / biotype 1B (strain NCTC 13174 / 8081)).